The chain runs to 304 residues: Cytochrome c biogenesis protein CcsA (304 aa).

8 helical membrane passes run 8-28 (LVTSLGFAAFVLLLIALPIAF), 37-57 (PGVVRLLVAVANLLLTAQLVL), 63-83 (GHFPISNLYESLCFLAWACTL), 96-116 (IVAAAATPMGLGCIAFASFAL), 141-161 (VIMVSYAALLVGSLLSLAVLV), 212-232 (TITVGFLMLTVGIISGAVWAN), 246-263 (TWALICWLVYAAYLHTRL), and 275-295 (VAVVGLIVIAVCYIGVNLLGI).

Belongs to the CcmF/CycK/Ccl1/NrfE/CcsA family. May interact with ccs1.

It is found in the cellular thylakoid membrane. Its function is as follows. Required during biogenesis of c-type cytochromes (cytochrome c6 and cytochrome f) at the step of heme attachment. The sequence is that of Cytochrome c biogenesis protein CcsA from Synechococcus sp. (strain CC9902).